The sequence spans 197 residues: MTAITITDAAHDYLADLLEKQNTPGIGIRVFITQPGTQYAETCIAYCKPGEEKPEDKAIGLKSFTAWIDGFSEAFLDDAVVDYATDRMGGQLTIKAPNAKVPMVNADSPINERINYYLQTEINPGLASHGGQVTLIDVVEEEAKNIAVLQFGGGCQGCGQADVTLKEGIERTLLERIPELSGVRDVTDHTQKENAYY.

[4Fe-4S] cluster is bound by residues Cys155 and Cys158.

This sequence belongs to the NfuA family. In terms of assembly, homodimer. It depends on [4Fe-4S] cluster as a cofactor.

Its function is as follows. Involved in iron-sulfur cluster biogenesis. Binds a 4Fe-4S cluster, can transfer this cluster to apoproteins, and thereby intervenes in the maturation of Fe/S proteins. Could also act as a scaffold/chaperone for damaged Fe/S proteins. The polypeptide is Fe/S biogenesis protein NfuA (Pseudomonas savastanoi pv. phaseolicola (strain 1448A / Race 6) (Pseudomonas syringae pv. phaseolicola (strain 1448A / Race 6))).